The primary structure comprises 121 residues: Basic phospholipase A2 homolog GodMT-II (121 aa).

Disulfide bonds link cysteine 26-cysteine 115, cysteine 28-cysteine 44, cysteine 43-cysteine 95, cysteine 49-cysteine 121, cysteine 50-cysteine 88, cysteine 57-cysteine 81, and cysteine 75-cysteine 86. Residues 105–117 (KNYKIYPKPLCKK) are important for membrane-damaging activities in eukaryotes and bacteria; heparin-binding.

The protein belongs to the phospholipase A2 family. Group II subfamily. K49 sub-subfamily. Monomer. Expressed by the venom gland.

The protein localises to the secreted. Snake venom phospholipase A2 homolog that lacks enzymatic activity but shows high myotoxic activities. In vivo, induces a mild edema when subcutaneously injected into mice foot pad. The chain is Basic phospholipase A2 homolog GodMT-II from Cerrophidion godmani (Porthidium godmani).